A 525-amino-acid polypeptide reads, in one-letter code: Probable CoA ligase CCL9 (525 aa).

Residues 171 to 179, 311 to 316, aspartate 395, 407 to 410, and lysine 501 contribute to the ATP site; these read TSGTTSRPK, EAYAMT, and LVGR. The segment at 242–311 is SBD1; that stretch reads SASTFWSDMI…EESFGAPVLE (70 aa). Residues 312–375 are SBD2; it reads AYAMTEAAHL…IRGPNVTKGY (64 aa).

Belongs to the ATP-dependent AMP-binding enzyme family.

Its subcellular location is the cytoplasm. It is found in the cytosol. This Humulus lupulus (European hop) protein is Probable CoA ligase CCL9.